We begin with the raw amino-acid sequence, 293 residues long: MEHLLSMEHLSNSEIYDLITIACQFKSGERPLPQFNGQYVSNLFFENSTRTKCSFEMAEQKLGLKLINFETSTSSVKKGESLYDTCKTLESIGVDLLVIRHSQNSYYEELDQLNIPIANAGDGSGQHPTQSLLDIMTIYEEYGSFEGLNILICGDIKNSRVARSNYHSLTSLGANVMFSSPKEWVDNTLEAPYVEIDEVIDKVDIVMLLRVQHERHGISGEANFAAEEYHQQFGLTQARYDKLKEEAIVMHPAPVNRGVEIKSELVEAPKSRIFKQMENGMYLRMAVISALLQ.

Residues arginine 50 and threonine 51 each coordinate carbamoyl phosphate. Residue lysine 78 participates in L-aspartate binding. Arginine 100, histidine 127, and glutamine 130 together coordinate carbamoyl phosphate. L-aspartate is bound by residues arginine 160 and arginine 210. Carbamoyl phosphate is bound by residues alanine 253 and proline 254.

This sequence belongs to the aspartate/ornithine carbamoyltransferase superfamily. ATCase family. In terms of assembly, heterododecamer (2C3:3R2) of six catalytic PyrB chains organized as two trimers (C3), and six regulatory PyrI chains organized as three dimers (R2).

It carries out the reaction carbamoyl phosphate + L-aspartate = N-carbamoyl-L-aspartate + phosphate + H(+). It functions in the pathway pyrimidine metabolism; UMP biosynthesis via de novo pathway; (S)-dihydroorotate from bicarbonate: step 2/3. Its function is as follows. Catalyzes the condensation of carbamoyl phosphate and aspartate to form carbamoyl aspartate and inorganic phosphate, the committed step in the de novo pyrimidine nucleotide biosynthesis pathway. The protein is Aspartate carbamoyltransferase catalytic subunit of Staphylococcus epidermidis (strain ATCC 12228 / FDA PCI 1200).